The sequence spans 355 residues: Peptide chain release factor 1 (355 aa).

N5-methylglutamine is present on Q231.

The protein belongs to the prokaryotic/mitochondrial release factor family. Post-translationally, methylated by PrmC. Methylation increases the termination efficiency of RF1.

It localises to the cytoplasm. In terms of biological role, peptide chain release factor 1 directs the termination of translation in response to the peptide chain termination codons UAG and UAA. This Aliarcobacter butzleri (strain RM4018) (Arcobacter butzleri) protein is Peptide chain release factor 1.